Reading from the N-terminus, the 331-residue chain is 5-formaminoimidazole-4-carboxamide-1-(beta)-D-ribofuranosyl 5'-monophosphate synthetase (331 aa).

5-amino-1-(5-phospho-beta-D-ribosyl)imidazole-4-carboxamide contacts are provided by histidine 9 and serine 69. The ATP-grasp domain maps to 76–322 (VELVEKMKVP…IAMELKQGLE (247 aa)). Residues 120 to 179 (PDDI…VPVY) and glutamate 201 contribute to the ATP site. 5-amino-1-(5-phospho-beta-D-ribosyl)imidazole-4-carboxamide is bound at residue asparagine 229. Residues glutamate 267 and glutamate 280 each coordinate Mg(2+).

Belongs to the phosphohexose mutase family. It depends on Mg(2+) as a cofactor. Mn(2+) serves as cofactor.

It catalyses the reaction 5-amino-1-(5-phospho-beta-D-ribosyl)imidazole-4-carboxamide + formate + ATP = 5-formamido-1-(5-phospho-D-ribosyl)imidazole-4-carboxamide + ADP + phosphate. The protein operates within purine metabolism; IMP biosynthesis via de novo pathway; 5-formamido-1-(5-phospho-D-ribosyl)imidazole-4-carboxamide from 5-amino-1-(5-phospho-D-ribosyl)imidazole-4-carboxamide (formate route): step 1/1. Its function is as follows. Catalyzes the ATP- and formate-dependent formylation of 5-aminoimidazole-4-carboxamide-1-beta-d-ribofuranosyl 5'-monophosphate (AICAR) to 5-formaminoimidazole-4-carboxamide-1-beta-d-ribofuranosyl 5'-monophosphate (FAICAR) in the absence of folates. This chain is 5-formaminoimidazole-4-carboxamide-1-(beta)-D-ribofuranosyl 5'-monophosphate synthetase, found in Thermococcus kodakarensis (strain ATCC BAA-918 / JCM 12380 / KOD1) (Pyrococcus kodakaraensis (strain KOD1)).